Reading from the N-terminus, the 136-residue chain is ATP synthase epsilon chain (136 aa).

Belongs to the ATPase epsilon chain family. F-type ATPases have 2 components, CF(1) - the catalytic core - and CF(0) - the membrane proton channel. CF(1) has five subunits: alpha(3), beta(3), gamma(1), delta(1), epsilon(1). CF(0) has three main subunits: a, b and c.

It localises to the cell inner membrane. Produces ATP from ADP in the presence of a proton gradient across the membrane. This is ATP synthase epsilon chain from Hydrogenobaculum sp. (strain Y04AAS1).